The sequence spans 147 residues: Hemoglobin subunit epsilon (147 aa).

One can recognise a Globin domain in the interval 3 to 147; that stretch reads HFTAEEKSTI…VATALAHKYH (145 aa). A phosphoserine mark is found at S14 and S51. The heme b site is built by H64 and H93.

The protein belongs to the globin family. In terms of assembly, heterotetramer of two alpha chains and two epsilon chains in early embryonic hemoglobin Gower-2; two zeta chains and two epsilon chains in early embryonic hemoglobin Gower-1. As to expression, red blood cells.

The epsilon chain is a beta-type chain of early mammalian embryonic hemoglobin. This chain is Hemoglobin subunit epsilon (HBE1), found in Propithecus verreauxi (White sifaka).